Reading from the N-terminus, the 504-residue chain is Anaerobic nitric oxide reductase transcription regulator NorR (504 aa).

Asp57 is subject to 4-aspartylphosphate. One can recognise a Sigma-54 factor interaction domain in the interval Met187–Val416. ATP is bound by residues Gly215–Glu222 and Ala278–Glu287. A DNA-binding region (H-T-H motif) is located at residues Trp479–Lys498.

It functions in the pathway nitrogen metabolism; nitric oxide reduction. Its function is as follows. Required for the expression of anaerobic nitric oxide (NO) reductase, acts as a transcriptional activator for at least the norVW operon. Activation also requires sigma-54. This Escherichia coli (strain SMS-3-5 / SECEC) protein is Anaerobic nitric oxide reductase transcription regulator NorR.